We begin with the raw amino-acid sequence, 232 residues long: Large ribosomal subunit protein uL1 (232 aa).

This sequence belongs to the universal ribosomal protein uL1 family. In terms of assembly, part of the 50S ribosomal subunit.

Functionally, binds directly to 23S rRNA. The L1 stalk is quite mobile in the ribosome, and is involved in E site tRNA release. Its function is as follows. Protein L1 is also a translational repressor protein, it controls the translation of the L11 operon by binding to its mRNA. The protein is Large ribosomal subunit protein uL1 of Chlamydia trachomatis serovar L2b (strain UCH-1/proctitis).